The following is a 536-amino-acid chain: Lysosomal acid glucosylceramidase (536 aa).

The N-terminal stretch at 1–39 (MELSSPSREECPRPQGRVGIMAASLMGLLLLQAASWASG) is a signal peptide. 2 disulfide bridges follow: C43-C55 and C57-C62. 3 N-linked (GlcNAc...) asparagine glycosylation sites follow: N58, N98, and N185. E274 acts as the Proton donor in catalysis. N-linked (GlcNAc...) asparagine glycosylation is present at N309. The active-site Nucleophile is the E379. N-linked (GlcNAc...) asparagine glycosylation occurs at N501.

This sequence belongs to the glycosyl hydrolase 30 family. In terms of assembly, interacts with saposin-C. Interacts with SCARB2. Interacts with TCP1. Interacts with GRN; this interaction prevents aggregation of GBA1-SCARB2 complex via interaction with HSPA1A upon stress.

Its subcellular location is the lysosome membrane. The enzyme catalyses a beta-D-glucosyl-(1&lt;-&gt;1')-N-acylsphing-4-enine + H2O = an N-acylsphing-4-enine + D-glucose. The catalysed reaction is a beta-D-galactosyl-(1&lt;-&gt;1')-N-acylsphing-4-enine + H2O = an N-acylsphing-4-enine + D-galactose. It catalyses the reaction cholesteryl 3-beta-D-glucoside + H2O = cholesterol + D-glucose. It carries out the reaction a beta-D-glucosyl-(1&lt;-&gt;1')-N-acylsphing-4-enine + cholesterol = cholesteryl 3-beta-D-glucoside + an N-acylsphing-4-enine. The enzyme catalyses beta-D-glucosyl-N-(9Z-octadecenoyl)-sphing-4E-enine + cholesterol = N-(9Z-octadecenoyl)-sphing-4-enine + cholesteryl 3-beta-D-glucoside. The catalysed reaction is beta-D-glucosyl-N-octanoylsphing-4E-enine + cholesterol = N-octanoylsphing-4-enine + cholesteryl 3-beta-D-glucoside. It catalyses the reaction beta-D-glucosyl-N-dodecanoylsphing-4-enine + cholesterol = N-dodecanoylsphing-4-enine + cholesteryl 3-beta-D-glucoside. It carries out the reaction beta-D-glucosyl-(1&lt;-&gt;1)-N-octadecanoylsphing-4-enine + cholesterol = N-octadecanoylsphing-4-enine + cholesteryl 3-beta-D-glucoside. The enzyme catalyses beta-D-glucosyl-(1&lt;-&gt;1')-N-(15Z-tetracosenoyl)-sphing-4-enine + cholesterol = N-(15Z-tetracosenoyl)-sphing-4-enine + cholesteryl 3-beta-D-glucoside. The catalysed reaction is a beta-D-galactosyl-(1&lt;-&gt;1')-N-acylsphing-4-enine + cholesterol = cholesteryl 3-beta-D-galactoside + an N-acylsphing-4-enine. It catalyses the reaction 1-(beta-D-galactosyl)-N-dodecanoylsphing-4-enine + cholesterol = cholesteryl 3-beta-D-galactoside + N-dodecanoylsphing-4-enine. It carries out the reaction a beta-D-xylosyl-(1&lt;-&gt;1')-N-acylsphing-4-enine + cholesterol = cholesteryl 3-beta-D-xyloside + an N-acylsphing-4-enine. The enzyme catalyses beta-D-xylosyl-(1&lt;-&gt;1')-N-(9Z-octadecenoyl)-sphing-4-enine + cholesterol = cholesteryl 3-beta-D-xyloside + N-(9Z-octadecenoyl)-sphing-4-enine. It functions in the pathway steroid metabolism; cholesterol metabolism. Its pathway is sphingolipid metabolism. Glucosylceramidase that catalyzes, within the lysosomal compartment, the hydrolysis of glucosylceramides/GlcCers (such as beta-D-glucosyl-(1&lt;-&gt;1')-N-acylsphing-4-enine) into free ceramides (such as N-acylsphing-4-enine) and glucose. Plays a central role in the degradation of complex lipids and the turnover of cellular membranes. Through the production of ceramides, participates in the PKC-activated salvage pathway of ceramide formation. Catalyzes the glucosylation of cholesterol, through a transglucosylation reaction where glucose is transferred from GlcCer to cholesterol. GlcCer containing mono-unsaturated fatty acids (such as beta-D-glucosyl-N-(9Z-octadecenoyl)-sphing-4-enine) are preferred as glucose donors for cholesterol glucosylation when compared with GlcCer containing same chain length of saturated fatty acids (such as beta-D-glucosyl-N-octadecanoyl-sphing-4-enine). Under specific conditions, may alternatively catalyze the reverse reaction, transferring glucose from cholesteryl 3-beta-D-glucoside to ceramide. Can also hydrolyze cholesteryl 3-beta-D-glucoside producing glucose and cholesterol. Catalyzes the hydrolysis of galactosylceramides/GalCers (such as beta-D-galactosyl-(1&lt;-&gt;1')-N-acylsphing-4-enine), as well as the transfer of galactose between GalCers and cholesterol in vitro, but with lower activity than with GlcCers. Contrary to GlcCer and GalCer, xylosylceramide/XylCer (such as beta-D-xyosyl-(1&lt;-&gt;1')-N-acylsphing-4-enine) is not a good substrate for hydrolysis, however it is a good xylose donor for transxylosylation activity to form cholesteryl 3-beta-D-xyloside. In Sus scrofa (Pig), this protein is Lysosomal acid glucosylceramidase (GBA1).